A 217-amino-acid polypeptide reads, in one-letter code: Membrane-associated progesterone receptor component 2 (217 aa).

O-linked (Xyl...) (chondroitin sulfate) serine glycosylation is present at Ser-15. The helical transmembrane segment at 40 to 62 (ALLATGGEMLLNVALVALVLLGA) threads the bilayer. Ser-84, Ser-98, and Ser-202 each carry phosphoserine. In terms of domain architecture, Cytochrome b5 heme-binding spans 96-195 (DFSLEQLRQY…EKYDYVGRLL (100 aa)). A disordered region spans residues 196-217 (KPGEEPSEYTDEEDTKDHSKQD). Residues 200-209 (EPSEYTDEED) are compositionally biased toward acidic residues. Tyr-204 is modified (phosphotyrosine). At Thr-205 the chain carries Phosphothreonine.

This sequence belongs to the cytochrome b5 family. MAPR subfamily. Interacts with PGRMC1. Interacts with AAAS.

It localises to the membrane. Its subcellular location is the nucleus envelope. It is found in the endoplasmic reticulum. The protein resides in the secreted. Required for the maintenance of uterine histoarchitecture and normal female reproductive lifespan. May serve as a universal non-classical progesterone receptor in the uterus. Intracellular heme chaperone required for delivery of labile, or signaling heme, to the nucleus. Plays a role in adipocyte function and systemic glucose homeostasis. In brown fat, which has a high demand for heme, delivery of labile heme in the nucleus regulates the activity of heme-responsive transcriptional repressors such as NR1D1 and BACH1. This is Membrane-associated progesterone receptor component 2 from Rattus norvegicus (Rat).